Reading from the N-terminus, the 80-residue chain is Large ribosomal subunit protein uL30 (80 aa).

It belongs to the universal ribosomal protein uL30 family. As to quaternary structure, part of the 50S ribosomal subunit.

This is Large ribosomal subunit protein uL30 from Vesicomyosocius okutanii subsp. Calyptogena okutanii (strain HA).